A 1118-amino-acid polypeptide reads, in one-letter code: Protein translocase subunit SecA (1118 aa).

ATP-binding positions include glutamine 176, 194–198, and aspartate 693; that span reads GEGKT. A disordered region spans residues 1034-1056; the sequence is QQPVQQPKYRETKDEAGSAFGGG.

The protein belongs to the SecA family. As to quaternary structure, monomer and homodimer. Part of the essential Sec protein translocation apparatus which comprises SecA, SecYEG and auxiliary proteins SecDF. Other proteins may also be involved.

The protein localises to the cell inner membrane. It is found in the cytoplasm. The enzyme catalyses ATP + H2O + cellular proteinSide 1 = ADP + phosphate + cellular proteinSide 2.. Its function is as follows. Part of the Sec protein translocase complex. Interacts with the SecYEG preprotein conducting channel. Has a central role in coupling the hydrolysis of ATP to the transfer of proteins into and across the cell membrane, serving as an ATP-driven molecular motor driving the stepwise translocation of polypeptide chains across the membrane. This is Protein translocase subunit SecA from Cytophaga hutchinsonii (strain ATCC 33406 / DSM 1761 / CIP 103989 / NBRC 15051 / NCIMB 9469 / D465).